A 377-amino-acid polypeptide reads, in one-letter code: Cyclin-I (377 aa).

The interval 356–377 (TDLSRQEGHASPCPPLQPVSVM) is disordered. Residues 367 to 377 (PCPPLQPVSVM) show a composition bias toward pro residues.

Belongs to the cyclin family.

The sequence is that of Cyclin-I (Ccni) from Mus musculus (Mouse).